A 183-amino-acid polypeptide reads, in one-letter code: Protein Syd (183 aa).

The protein belongs to the Syd family.

Its subcellular location is the cell inner membrane. Its function is as follows. Interacts with the SecY protein in vivo. May bind preferentially to an uncomplexed state of SecY, thus functioning either as a chelating agent for excess SecY in the cell or as a regulatory factor that negatively controls the translocase function. The polypeptide is Protein Syd (Yersinia pestis bv. Antiqua (strain Antiqua)).